Here is a 96-residue protein sequence, read N- to C-terminus: Nucleoid-associated protein DR_0199 (96 aa).

The protein belongs to the YbaB/EbfC family. In terms of assembly, homodimer.

The protein localises to the cytoplasm. The protein resides in the nucleoid. Functionally, binds to DNA and alters its conformation. May be involved in regulation of gene expression, nucleoid organization and DNA protection. The sequence is that of Nucleoid-associated protein DR_0199 from Deinococcus radiodurans (strain ATCC 13939 / DSM 20539 / JCM 16871 / CCUG 27074 / LMG 4051 / NBRC 15346 / NCIMB 9279 / VKM B-1422 / R1).